Here is a 454-residue protein sequence, read N- to C-terminus: Bifunctional protein GlmU (454 aa).

The segment at 1 to 232 is pyrophosphorylase; that stretch reads MTDRTCLSIV…VDNVIGINNR (232 aa). UDP-N-acetyl-alpha-D-glucosamine is bound by residues 11–14, Lys25, Gln78, and 83–84; these read LAAG and GT. Position 108 (Asp108) interacts with Mg(2+). Residues Gly144, Glu158, Asn173, and Asn230 each contribute to the UDP-N-acetyl-alpha-D-glucosamine site. Asn230 lines the Mg(2+) pocket. The segment at 233-253 is linker; sequence AELAEAETIWQNRKRRELMLS. The segment at 254 to 454 is N-acetyltransferase; it reads GVTLIAPETV…AIKAAKSVSK (201 aa). UDP-N-acetyl-alpha-D-glucosamine-binding residues include Arg319 and Lys337. His349 serves as the catalytic Proton acceptor. UDP-N-acetyl-alpha-D-glucosamine-binding residues include Tyr352 and Asn363. Residues Ala366, 372-373, Ser391, Ser409, and Arg426 each bind acetyl-CoA; that span reads NY.

It in the N-terminal section; belongs to the N-acetylglucosamine-1-phosphate uridyltransferase family. The protein in the C-terminal section; belongs to the transferase hexapeptide repeat family. Homotrimer. It depends on Mg(2+) as a cofactor.

The protein localises to the cytoplasm. It catalyses the reaction alpha-D-glucosamine 1-phosphate + acetyl-CoA = N-acetyl-alpha-D-glucosamine 1-phosphate + CoA + H(+). The enzyme catalyses N-acetyl-alpha-D-glucosamine 1-phosphate + UTP + H(+) = UDP-N-acetyl-alpha-D-glucosamine + diphosphate. It functions in the pathway nucleotide-sugar biosynthesis; UDP-N-acetyl-alpha-D-glucosamine biosynthesis; N-acetyl-alpha-D-glucosamine 1-phosphate from alpha-D-glucosamine 6-phosphate (route II): step 2/2. It participates in nucleotide-sugar biosynthesis; UDP-N-acetyl-alpha-D-glucosamine biosynthesis; UDP-N-acetyl-alpha-D-glucosamine from N-acetyl-alpha-D-glucosamine 1-phosphate: step 1/1. The protein operates within bacterial outer membrane biogenesis; LPS lipid A biosynthesis. In terms of biological role, catalyzes the last two sequential reactions in the de novo biosynthetic pathway for UDP-N-acetylglucosamine (UDP-GlcNAc). The C-terminal domain catalyzes the transfer of acetyl group from acetyl coenzyme A to glucosamine-1-phosphate (GlcN-1-P) to produce N-acetylglucosamine-1-phosphate (GlcNAc-1-P), which is converted into UDP-GlcNAc by the transfer of uridine 5-monophosphate (from uridine 5-triphosphate), a reaction catalyzed by the N-terminal domain. This is Bifunctional protein GlmU from Brucella abortus (strain S19).